We begin with the raw amino-acid sequence, 262 residues long: F-actin-capping protein subunit alpha (262 aa).

It belongs to the F-actin-capping protein alpha subunit family. As to quaternary structure, heterodimer of an alpha and a beta subunit.

It localises to the cytoplasm. The protein localises to the cytoskeleton. In terms of biological role, F-actin-capping proteins bind in a Ca(2+)-independent manner to the fast growing ends of actin filaments (barbed end) thereby blocking the exchange of subunits at these ends. Unlike other capping proteins (such as gelsolin and severin), these proteins do not sever actin filaments. This chain is F-actin-capping protein subunit alpha (CAP1), found in Yarrowia lipolytica (strain CLIB 122 / E 150) (Yeast).